A 401-amino-acid chain; its full sequence is Phosphoglycerate kinase (401 aa).

Residues 20 to 22, Arg35, 58 to 61, Arg117, and Arg154 contribute to the substrate site; these read DFN and HLGR. ATP is bound by residues Lys204, Gly298, Glu329, and 358–361; that span reads GGDS.

This sequence belongs to the phosphoglycerate kinase family. As to quaternary structure, monomer.

It localises to the cytoplasm. The catalysed reaction is (2R)-3-phosphoglycerate + ATP = (2R)-3-phospho-glyceroyl phosphate + ADP. It functions in the pathway carbohydrate degradation; glycolysis; pyruvate from D-glyceraldehyde 3-phosphate: step 2/5. This chain is Phosphoglycerate kinase, found in Bifidobacterium longum (strain NCC 2705).